Here is a 548-residue protein sequence, read N- to C-terminus: Chaperonin GroEL (548 aa).

Residues 30–33, lysine 51, 87–91, glycine 415, and 479–481 contribute to the ATP site; these read TLGP, DGTTT, and NAV.

The protein belongs to the chaperonin (HSP60) family. Forms a cylinder of 14 subunits composed of two heptameric rings stacked back-to-back. Interacts with the co-chaperonin GroES.

The protein resides in the cytoplasm. The enzyme catalyses ATP + H2O + a folded polypeptide = ADP + phosphate + an unfolded polypeptide.. Together with its co-chaperonin GroES, plays an essential role in assisting protein folding. The GroEL-GroES system forms a nano-cage that allows encapsulation of the non-native substrate proteins and provides a physical environment optimized to promote and accelerate protein folding. The chain is Chaperonin GroEL from Stenotrophomonas maltophilia (Pseudomonas maltophilia).